The sequence spans 473 residues: Hyaluronidase-2 (473 aa).

Positions 1–20 (MRAGLGPIITLALVLEVAWA) are cleaved as a signal peptide. Disulfide bonds link cysteine 47–cysteine 340 and cysteine 211–cysteine 227. 2 N-linked (GlcNAc...) asparagine glycosylation sites follow: asparagine 74 and asparagine 103. Catalysis depends on glutamate 135, which acts as the Proton donor. Asparagine 357 carries N-linked (GlcNAc...) asparagine glycosylation. The EGF-like domain occupies 361–439 (ATQYCSWTQC…YLGWGGEQCQ (79 aa)). Disulfide bonds link cysteine 365–cysteine 376, cysteine 370–cysteine 427, and cysteine 429–cysteine 438. Asparagine 390 is a glycosylation site (N-linked (GlcNAc...) asparagine). Asparagine 448 carries the GPI-anchor amidated asparagine; alternate lipid modification. Asparagine 448 is a glycosylation site (N-linked (GlcNAc...) asparagine; alternate). A propeptide spans 449-473 (ASRAWAGSHLTSLLGLVAVALTWTL) (removed in mature form).

The protein belongs to the glycosyl hydrolase 56 family. In terms of assembly, interacts with MST1R. Widely expressed, with highest expression levels in kidney, lung and liver (at protein level).

The protein localises to the cell membrane. The catalysed reaction is Random hydrolysis of (1-&gt;4)-linkages between N-acetyl-beta-D-glucosamine and D-glucuronate residues in hyaluronate.. Its function is as follows. Catalyzes hyaluronan degradation into small fragments that are endocytosed and degraded in lysosomes by HYAL1 and exoglycosidases. Essential for the breakdown of extracellular matrix hyaluronan. The protein is Hyaluronidase-2 (Hyal2) of Mus musculus (Mouse).